The chain runs to 320 residues: MHDFLSIHPEVAAALKAGRPVVALESTLISHGLPAPANLETAQAIEAAVRANGAVPATIAVLDGRIRVGLDAEDMQRLAAPGTAKVSRRDLPLVLAKGADGATTVAATMIAADLAGIAVFATGGIGGVHRGVETTGDISADLEELATTSVAVVCAGAKAILDLPRTLEYLETRGVPVVGFGTDAFPAFYHRDSGLPVDGRCDTPEDAARVLNAKWRLGLAGGIVVAVPIPDEAALDAAQAEAAVQQAVAEAATGGVRGKALTPFLLHRLETLTGGASLTANRALLLNNAAVGARIAVAYARLKQETTLPKKPPPSKRPTY.

The Proton donor role is filled by E25. The substrate site is built by K85 and V105. A Mn(2+)-binding site is contributed by D137. 139–141 (SAD) is a substrate binding site. Catalysis depends on K158, which acts as the Nucleophile.

This sequence belongs to the pseudouridine-5'-phosphate glycosidase family. Homotrimer. Mn(2+) serves as cofactor.

The catalysed reaction is D-ribose 5-phosphate + uracil = psi-UMP + H2O. Functionally, catalyzes the reversible cleavage of pseudouridine 5'-phosphate (PsiMP) to ribose 5-phosphate and uracil. Functions biologically in the cleavage direction, as part of a pseudouridine degradation pathway. The protein is Pseudouridine-5'-phosphate glycosidase of Rhodospirillum centenum (strain ATCC 51521 / SW).